We begin with the raw amino-acid sequence, 350 residues long: Protein RecA (350 aa).

An ATP-binding site is contributed by 68–75 (GPESSGKT).

It belongs to the RecA family.

It is found in the cytoplasm. Its function is as follows. Can catalyze the hydrolysis of ATP in the presence of single-stranded DNA, the ATP-dependent uptake of single-stranded DNA by duplex DNA, and the ATP-dependent hybridization of homologous single-stranded DNAs. It interacts with LexA causing its activation and leading to its autocatalytic cleavage. The polypeptide is Protein RecA (Mycolicibacterium gilvum (strain PYR-GCK) (Mycobacterium gilvum (strain PYR-GCK))).